Consider the following 1121-residue polypeptide: Phytochrome 2 (1121 aa).

The 180-residue stretch at 214–393 (DIGLLCDTVV…VFGMQLNMEV (180 aa)) folds into the GAF domain. C319 provides a ligand contact to phytochromobilin. PAS domains follow at residues 608-679 (VANE…SQGE) and 742-813 (DYKT…TKFM). Residues 893–1113 (YIRQEIKNPL…VVYVELPMAQ (221 aa)) form the Histidine kinase domain.

It belongs to the phytochrome family. Homodimer. In terms of processing, contains one covalently linked phytochromobilin chromophore.

Functionally, regulatory photoreceptor which exists in two forms that are reversibly interconvertible by light: the Pr form that absorbs maximally in the red region of the spectrum and the Pfr form that absorbs maximally in the far-red region. Photoconversion of Pr to Pfr induces an array of morphogenic responses, whereas reconversion of Pfr to Pr cancels the induction of those responses. Pfr controls the expression of a number of nuclear genes including those encoding the small subunit of ribulose-bisphosphate carboxylase, chlorophyll A/B binding protein, protochlorophyllide reductase, rRNA, etc. It also controls the expression of its own gene(s) in a negative feedback fashion. The sequence is that of Phytochrome 2 (PHY2) from Ceratodon purpureus (Fire moss).